We begin with the raw amino-acid sequence, 527 residues long: Phosphoenolpyruvate carboxykinase (ATP) (527 aa).

Residues R56, Y192, and K198 each coordinate substrate. ATP contacts are provided by residues K198, H217, and 233–241 (GLSGTGKTT). Mn(2+) is bound by residues K198 and H217. D254 is a Mn(2+) binding site. Residues E282, R319, and T444 each coordinate ATP. R319 contacts substrate.

The protein belongs to the phosphoenolpyruvate carboxykinase (ATP) family. Mn(2+) serves as cofactor.

The protein resides in the cytoplasm. The enzyme catalyses oxaloacetate + ATP = phosphoenolpyruvate + ADP + CO2. It functions in the pathway carbohydrate biosynthesis; gluconeogenesis. Involved in the gluconeogenesis. Catalyzes the conversion of oxaloacetate (OAA) to phosphoenolpyruvate (PEP) through direct phosphoryl transfer between the nucleoside triphosphate and OAA. The polypeptide is Phosphoenolpyruvate carboxykinase (ATP) (Bacillus velezensis (strain DSM 23117 / BGSC 10A6 / LMG 26770 / FZB42) (Bacillus amyloliquefaciens subsp. plantarum)).